A 353-amino-acid chain; its full sequence is Photosystem II D2 protein (353 aa).

Thr-2 carries the post-translational modification N-acetylthreonine. At Thr-2 the chain carries Phosphothreonine. The helical transmembrane segment at 41 to 61 (CAYFALGGWFTGTTFVTSWYT) threads the bilayer. His-118 provides a ligand contact to chlorophyll a. A helical membrane pass occupies residues 125–141 (GFMLRQFELARSVQLRP). Residues Gln-130 and Asn-143 each coordinate pheophytin a. Residues 153-166 (VFVSVFLIYPLGQS) traverse the membrane as a helical segment. A chlorophyll a-binding site is contributed by His-198. The chain crosses the membrane as a helical span at residues 208-228 (AALLCAIHGATVENTLFEDGD). The a plastoquinone site is built by His-215 and Phe-262. His-215 is a Fe cation binding site. His-269 lines the Fe cation pocket. The chain crosses the membrane as a helical span at residues 279 to 295 (GLWMSALGVVGLALNLR).

The protein belongs to the reaction center PufL/M/PsbA/D family. As to quaternary structure, PSII is composed of 1 copy each of membrane proteins PsbA, PsbB, PsbC, PsbD, PsbE, PsbF, PsbH, PsbI, PsbJ, PsbK, PsbL, PsbM, PsbT, PsbX, PsbY, PsbZ, Psb30/Ycf12, at least 3 peripheral proteins of the oxygen-evolving complex and a large number of cofactors. It forms dimeric complexes. The cofactor is The D1/D2 heterodimer binds P680, chlorophylls that are the primary electron donor of PSII, and subsequent electron acceptors. It shares a non-heme iron and each subunit binds pheophytin, quinone, additional chlorophylls, carotenoids and lipids. There is also a Cl(-1) ion associated with D1 and D2, which is required for oxygen evolution. The PSII complex binds additional chlorophylls, carotenoids and specific lipids..

Its subcellular location is the plastid. The protein resides in the chloroplast thylakoid membrane. The catalysed reaction is 2 a plastoquinone + 4 hnu + 2 H2O = 2 a plastoquinol + O2. Its function is as follows. Photosystem II (PSII) is a light-driven water:plastoquinone oxidoreductase that uses light energy to abstract electrons from H(2)O, generating O(2) and a proton gradient subsequently used for ATP formation. It consists of a core antenna complex that captures photons, and an electron transfer chain that converts photonic excitation into a charge separation. The D1/D2 (PsbA/PsbD) reaction center heterodimer binds P680, the primary electron donor of PSII as well as several subsequent electron acceptors. D2 is needed for assembly of a stable PSII complex. This is Photosystem II D2 protein from Platanus occidentalis (Sycamore).